The following is a 381-amino-acid chain: MKKIYFIAGEASGDFAGGRIIRNLKADKELKIIGIGGRNMEEAGNFESLFPISEINLMGFFEVIPHIFRIKKLINKTVEDIIDNKPDILITIDSPGFTYRVAAKVRERLPELKMIHIVAPSVWAYKEGRAAKYAKIYNCLFALLPFEPPYFTKVGLDCRYIGHPIMEQEFYSDKVALRQELEIDEDTKVLCVTLGSRKGEILRHLPIFIPAIEKVYDDHKKKLMVIFPLANPDHERIIKPFLEKVRFNYIFSYERLKSYAVSDLALAKSGTNTLEIAASGTPMIVAYKVNIFSFIIIRLLIKIKYVTLINIIGNREIIPEFIQFNCEANLISDKLKELLLNPQEVDKQITESHKILQELGFKSNIYPSYLATKIIRQEFLK.

The protein belongs to the LpxB family.

The enzyme catalyses a lipid X + a UDP-2-N,3-O-bis[(3R)-3-hydroxyacyl]-alpha-D-glucosamine = a lipid A disaccharide + UDP + H(+). It participates in bacterial outer membrane biogenesis; LPS lipid A biosynthesis. Condensation of UDP-2,3-diacylglucosamine and 2,3-diacylglucosamine-1-phosphate to form lipid A disaccharide, a precursor of lipid A, a phosphorylated glycolipid that anchors the lipopolysaccharide to the outer membrane of the cell. The chain is Lipid-A-disaccharide synthase from Rickettsia bellii (strain OSU 85-389).